We begin with the raw amino-acid sequence, 140 residues long: Translation initiation factor 2 subunit beta (140 aa).

The protein belongs to the eIF-2-beta/eIF-5 family. As to quaternary structure, heterotrimer composed of an alpha, a beta and a gamma chain.

Functionally, eIF-2 functions in the early steps of protein synthesis by forming a ternary complex with GTP and initiator tRNA. The polypeptide is Translation initiation factor 2 subunit beta (Metallosphaera sedula (strain ATCC 51363 / DSM 5348 / JCM 9185 / NBRC 15509 / TH2)).